A 400-amino-acid chain; its full sequence is MYPYPNEIGRYGEFGGKFVPETLMRPLEEIETAFKELKNDPVFHAEYKKLLFDYSGRPTALTFADRVSEYLGGAKIYLKREDLNHTGSHKINNALGQILLAKKMGKTKIIAETGAGQHGVAAATAAAKFGFKCTVFMGEEDVARQSLNVFRMKLLGAEVVPVTSGNGTLKDATNEAIRYWVQHCEDHFYLIGSVVGPHPYPYIVREFQKIIGEEAKEQLRRVEGTLPDKVVACVGGGSNAMGIFQAFLDEDTELIGAEAAGKGIDTPLHAATIAKGTLGVIHGSMTYLIQDQYGQIIEPYSISAGLDYPGIGPEHAYLHKSGRVTYESVTDDEAIAALRLLSETEGILPAIESAHALAKAFEMAKDMDKDKIILVSLSGRGDKDVHTLMNVLENGVGTHV.

N6-(pyridoxal phosphate)lysine is present on Lys-90.

The protein belongs to the TrpB family. Tetramer of two alpha and two beta chains. Pyridoxal 5'-phosphate serves as cofactor.

It catalyses the reaction (1S,2R)-1-C-(indol-3-yl)glycerol 3-phosphate + L-serine = D-glyceraldehyde 3-phosphate + L-tryptophan + H2O. It functions in the pathway amino-acid biosynthesis; L-tryptophan biosynthesis; L-tryptophan from chorismate: step 5/5. Its function is as follows. The beta subunit is responsible for the synthesis of L-tryptophan from indole and L-serine. The protein is Tryptophan synthase beta chain of Bacillus velezensis (strain DSM 23117 / BGSC 10A6 / LMG 26770 / FZB42) (Bacillus amyloliquefaciens subsp. plantarum).